The sequence spans 254 residues: HTH-type transcriptional regulator GlvR (254 aa).

The region spanning 1–77 (MQLEELINQH…VFLKWEDQPE (77 aa)) is the HTH rpiR-type domain. A DNA-binding region (H-T-H motif) is located at residues 37–56 (IDALAKACSVSRSSILRLAQ). Residues 106–248 (MCQLIDAADR…FRAYVDYKEA (143 aa)) form the SIS domain.

Positive regulator of the glv operon expression, which consists of GlvA, GlvR and GlvC. The polypeptide is HTH-type transcriptional regulator GlvR (glvR) (Bacillus subtilis (strain 168)).